The sequence spans 377 residues: MASSEQAEQPSQPSSSPGSENVVPREPLIATAVKFLQNSRVRQSPLATRRAFLKKKGLTDDEIDLAFQQSGTATEEPPSLGLATPVAPVQTPHLIAQPCSPGSSRWRDYGALAIIMAGIAFGFHQLYKKYLLPLILGGREDRKQLERMASSLSELSGSVAQTVTQVQTTLASVQELLRQQQQKVQELAHELAAAKATTSTNWILESQNINELKSEINSLKGLLLNRRQFPPSPSAPKIPSWQIPVKSPSPSSPAAVNHHSSSDISPVSNESTSSSPGKESHSPEGSTATYHLLGPQEEGEGVVDVKGQVRMEVQGEEEKREDKEEEEEEEEEDVSHVDEEDVLGVQREDRRGGDGQINEQVDKLRRPEGASNESERH.

Positions Met1–Glu20 are enriched in low complexity. The tract at residues Met1–Val23 is disordered. Residue Ala2 is modified to N-acetylalanine. The Peroxisomal segment spans residues Ala2–Asp108. Residue Lys34 is modified to N6-acetyllysine. Residues Tyr109–Leu126 traverse the membrane as a helical segment. At Tyr127 to His377 the chain is on the cytoplasmic side. The segment at Pro230–His377 is disordered. Ser232 bears the Phosphoserine mark. Composition is skewed to low complexity over residues Pro244–His259 and Ser265–Ser275. A phosphoserine mark is found at Ser282 and Ser335. Acidic residues predominate over residues Lys323–Val342. The span at Gln360–His377 shows a compositional bias: basic and acidic residues.

It belongs to the peroxin-14 family. In terms of assembly, interacts with PEX13; forming the PEX13-PEX14 docking complex. Interacts with PEX5 (via WxxxF/Y motifs). Interacts with PEX19. Interacts with tubulin.

It is found in the peroxisome membrane. Its function is as follows. Component of the PEX13-PEX14 docking complex, a translocon channel that specifically mediates the import of peroxisomal cargo proteins bound to PEX5 receptor. The PEX13-PEX14 docking complex forms a large import pore which can be opened to a diameter of about 9 nm. Mechanistically, PEX5 receptor along with cargo proteins associates with the PEX14 subunit of the PEX13-PEX14 docking complex in the cytosol, leading to the insertion of the receptor into the organelle membrane with the concomitant translocation of the cargo into the peroxisome matrix. Plays a key role for peroxisome movement through a direct interaction with tubulin. The sequence is that of Peroxisomal membrane protein PEX14 from Cricetulus longicaudatus (Long-tailed dwarf hamster).